The primary structure comprises 122 residues: Serum amyloid A-2 protein (122 aa).

Residues 1 to 18 (MKPFLSIIFCFLVLGVDS) form the signal peptide. Q19 is subject to Pyrrolidone carboxylic acid. The segment at 100–122 (ANEWGRSGKDPNFFRPPGLPSKY) is disordered.

The protein belongs to the SAA family. Apolipoprotein of the HDL complex. Expressed by the liver; secreted in plasma.

The protein localises to the secreted. In terms of biological role, major acute phase reactant. The sequence is that of Serum amyloid A-2 protein (SAA2) from Mesocricetus auratus (Golden hamster).